The primary structure comprises 143 residues: Nucleoside diphosphate kinase (143 aa).

Positions 11, 59, 87, 93, 104, and 114 each coordinate ATP. Histidine 117 serves as the catalytic Pros-phosphohistidine intermediate.

It belongs to the NDK family. As to quaternary structure, homotetramer. The cofactor is Mg(2+).

It localises to the cytoplasm. It carries out the reaction a 2'-deoxyribonucleoside 5'-diphosphate + ATP = a 2'-deoxyribonucleoside 5'-triphosphate + ADP. The catalysed reaction is a ribonucleoside 5'-diphosphate + ATP = a ribonucleoside 5'-triphosphate + ADP. Its function is as follows. Major role in the synthesis of nucleoside triphosphates other than ATP. The ATP gamma phosphate is transferred to the NDP beta phosphate via a ping-pong mechanism, using a phosphorylated active-site intermediate. The chain is Nucleoside diphosphate kinase from Cronobacter sakazakii (strain ATCC BAA-894) (Enterobacter sakazakii).